We begin with the raw amino-acid sequence, 218 residues long: MALVPYEESAAIGLQKFHKPLATFSFANHTIQIRQDWRQLGVAAVVWDAAVVLSMYLEMGAVELRGCSAVELGAGTGLVGIVAALLGAQVTITDRKVALEFLKSNVEANLPPHIQPKAVVKELTWGQNLESFSPGEFDLILGADVIYLEDTFTDLLQTLGHLCSNNSVILLACRIRYERDSNFLTMLERQFTVSKVHYDPEKDVHIYKAQKRNQREDL.

Residues Trp47, Gly73–Gly75, Asp94, Trp125, and Ala143 each bind S-adenosyl-L-methionine.

Belongs to the methyltransferase superfamily. METTL21 family. As to quaternary structure, interacts with heat shock 70 family members; at least some of these proteins are methylation substrates.

It localises to the cytoplasm. It carries out the reaction L-lysyl-[protein] + 3 S-adenosyl-L-methionine = N(6),N(6),N(6)-trimethyl-L-lysyl-[protein] + 3 S-adenosyl-L-homocysteine + 3 H(+). Functionally, protein-lysine methyltransferase that selectively trimethylates residues in heat shock protein 70 (HSP70) family members. Contributes to the in vivo trimethylation of Lys residues in HSPA1 and HSPA8. In vitro methylates 'Lys-561' in HSPA1, 'Lys-564' in HSPA2, 'Lys-585' in HSPA5, 'Lys-563' in HSPA6 and 'Lys-561' in HSPA8. This is Protein N-lysine methyltransferase METTL21A (Mettl21A) from Mus musculus (Mouse).